The following is a 431-amino-acid chain: Cyclin-B2-4 (431 aa).

Positions 1-30 (MGGSDENRHGVIGPMNRQQGGLRGGKVIPT) are disordered.

It belongs to the cyclin family. Cyclin AB subfamily. In terms of assembly, interacts with SMR11.

In Arabidopsis thaliana (Mouse-ear cress), this protein is Cyclin-B2-4 (CYCB2-4).